Reading from the N-terminus, the 337-residue chain is Trace amine-associated receptor 5 (337 aa).

The Extracellular portion of the chain corresponds to Met-1 to Gln-34. The N-linked (GlcNAc...) asparagine glycan is linked to Asn-21. Intrachain disulfides connect Cys-24–Cys-188 and Cys-99–Cys-192. The chain crosses the membrane as a helical span at residues Leu-35–Val-55. The Cytoplasmic portion of the chain corresponds to Ala-56 to Asn-70. A helical membrane pass occupies residues Phe-71–Ser-91. Residues Thr-92 to Leu-109 lie on the Extracellular side of the membrane. A helical transmembrane segment spans residues His-110–Ile-130. The Cytoplasmic portion of the chain corresponds to Asp-131–Tyr-154. The helical transmembrane segment at Ile-155–Val-175 threads the bilayer. The interval Glu-176–Val-189 is extracellular Loop 2 (ECL2). The Extracellular portion of the chain corresponds to Glu-176–Asn-204. Residues Phe-205 to Val-225 traverse the membrane as a helical segment. Topologically, residues Ala-226–Thr-253 are cytoplasmic. The helical transmembrane segment at Leu-254 to Val-274 threads the bilayer. The Extracellular portion of the chain corresponds to Asp-275–Pro-284. The helical transmembrane segment at Leu-285–Phe-307 threads the bilayer. At Ser-308–Glu-337 the chain is on the cytoplasmic side.

Belongs to the G-protein coupled receptor 1 family. As to expression, expressed almost exclusively in skeletal muscle and selected areas of the brain, such amygdala, hippocampus, caudate nucleus, thalamus and hypothalamus. Weak expression is also find in substantia nigra.

It localises to the cell membrane. Functionally, olfactory receptor specific for trimethylamine, a trace amine. Also activated at lower level by dimethylethylamine. Trimethylamine is a bacterial metabolite found in some animal odors, and to humans it is a repulsive odor associated with bad breath and spoiled food. Trimethylamine-binding causes a conformation change that triggers signaling via G(s)-class of G alpha proteins (GNAL or GNAS). This Homo sapiens (Human) protein is Trace amine-associated receptor 5.